Here is a 619-residue protein sequence, read N- to C-terminus: ATP-dependent RNA helicase DBP8 (619 aa).

The segment at 1–149 (MAVSKKSRKS…NGLPSASKPS (149 aa)) is disordered. A compositionally biased stretch (acidic residues) spans 46-67 (EGNDESDEEDDDVSNEGEDEGE). Low complexity predominate over residues 68 to 78 (SSGSEAESSVA). Over residues 93-105 (LDAEGEEDKENEE) the composition is skewed to acidic residues. Polar residues predominate over residues 137-147 (PQPNGLPSASK). A Q motif motif is present at residues 152–180 (VTFESLGLSRPLITALASINIKKPTEIQA). Positions 183-356 (VEPILSGRDC…NKEPPAGKQR (174 aa)) constitute a Helicase ATP-binding domain. Residue 196–203 (AKTGSGKT) participates in ATP binding. The DEAD box motif lies at 304 to 307 (DEAD). Residues 414–436 (EREAALGKKGKKPKQAKEEEDAP) are disordered. Positions 430–572 (KEEEDAPSVP…ELKLDEDKVL (143 aa)) constitute a Helicase C-terminal domain.

This sequence belongs to the DEAD box helicase family. DDX49/DBP8 subfamily.

The protein resides in the nucleus. It localises to the nucleolus. The enzyme catalyses ATP + H2O = ADP + phosphate + H(+). ATP-binding RNA helicase involved in 40S ribosomal subunit biogenesis and is required for the normal formation of 18S rRNAs through pre-rRNA processing at A0, A1 and A2 sites. Required for vegetative growth. This Cryptococcus neoformans var. neoformans serotype D (strain B-3501A) (Filobasidiella neoformans) protein is ATP-dependent RNA helicase DBP8 (DBP8).